The following is a 229-amino-acid chain: Tubulin-specific chaperone B (229 aa).

Residues 170–212 (GATKFKEGVWVGVKYDEPVGKNDGSVAGVRYFDCDPKYGGFVR) form the CAP-Gly domain.

It belongs to the TBCB family. In terms of assembly, supercomplex made of cofactors A to E. Cofactors A and D function by capturing and stabilizing tubulin in a quasi-native conformation. Cofactor E binds to the cofactor D-tubulin complex; interaction with cofactor C then causes the release of tubulin polypeptides that are committed to the native state.

The protein localises to the cytoplasm. It localises to the cytoskeleton. Its function is as follows. Binds to alpha-tubulin folding intermediates after their interaction with cytosolic chaperonin in the pathway leading from newly synthesized tubulin to properly folded heterodimer. The polypeptide is Tubulin-specific chaperone B (Caenorhabditis elegans).